Here is a 101-residue protein sequence, read N- to C-terminus: NAD(P)H-quinone oxidoreductase subunit 4L, chloroplastic (101 aa).

A run of 3 helical transmembrane segments spans residues 2–22 (MFEHVLFLSVYLFSIGIYGLI), 32–52 (ICLELILNSINLNLVTFSDLF), and 61–81 (IFAIFVIALAAAEAAIGLSIL).

Belongs to the complex I subunit 4L family. NDH is composed of at least 16 different subunits, 5 of which are encoded in the nucleus.

The protein localises to the plastid. It localises to the chloroplast thylakoid membrane. The catalysed reaction is a plastoquinone + NADH + (n+1) H(+)(in) = a plastoquinol + NAD(+) + n H(+)(out). It catalyses the reaction a plastoquinone + NADPH + (n+1) H(+)(in) = a plastoquinol + NADP(+) + n H(+)(out). NDH shuttles electrons from NAD(P)H:plastoquinone, via FMN and iron-sulfur (Fe-S) centers, to quinones in the photosynthetic chain and possibly in a chloroplast respiratory chain. The immediate electron acceptor for the enzyme in this species is believed to be plastoquinone. Couples the redox reaction to proton translocation, and thus conserves the redox energy in a proton gradient. This is NAD(P)H-quinone oxidoreductase subunit 4L, chloroplastic from Oryza nivara (Indian wild rice).